The sequence spans 270 residues: Putative ABC transporter ATP-binding protein MG304 homolog (270 aa).

The ABC transporter domain occupies 2–232 (LNVTNLSFTY…LHLFHQHHFT (231 aa)). 36–43 (GHNGSGKS) contacts ATP.

Belongs to the ABC transporter superfamily.

In Mycoplasma pneumoniae (strain ATCC 29342 / M129 / Subtype 1) (Mycoplasmoides pneumoniae), this protein is Putative ABC transporter ATP-binding protein MG304 homolog.